A 151-amino-acid chain; its full sequence is Putative UPF0320 protein YFL063W (151 aa).

The protein belongs to the UPF0320 family.

The protein is Putative UPF0320 protein YFL063W of Saccharomyces cerevisiae (strain ATCC 204508 / S288c) (Baker's yeast).